The primary structure comprises 341 residues: tRNA N6-adenosine threonylcarbamoyltransferase (341 aa).

Fe cation-binding residues include histidine 118 and histidine 122. Substrate-binding positions include 141 to 145 (LVSGG), aspartate 174, glycine 187, and asparagine 281. Residue aspartate 309 coordinates Fe cation.

Belongs to the KAE1 / TsaD family. Fe(2+) serves as cofactor.

The protein resides in the cytoplasm. The catalysed reaction is L-threonylcarbamoyladenylate + adenosine(37) in tRNA = N(6)-L-threonylcarbamoyladenosine(37) in tRNA + AMP + H(+). Required for the formation of a threonylcarbamoyl group on adenosine at position 37 (t(6)A37) in tRNAs that read codons beginning with adenine. Is involved in the transfer of the threonylcarbamoyl moiety of threonylcarbamoyl-AMP (TC-AMP) to the N6 group of A37, together with TsaE and TsaB. TsaD likely plays a direct catalytic role in this reaction. In Desulfitobacterium hafniense (strain Y51), this protein is tRNA N6-adenosine threonylcarbamoyltransferase.